We begin with the raw amino-acid sequence, 379 residues long: Cobalt-precorrin-5B C(1)-methyltransferase (379 aa).

Belongs to the CbiD family.

It catalyses the reaction Co-precorrin-5B + S-adenosyl-L-methionine = Co-precorrin-6A + S-adenosyl-L-homocysteine. The protein operates within cofactor biosynthesis; adenosylcobalamin biosynthesis; cob(II)yrinate a,c-diamide from sirohydrochlorin (anaerobic route): step 6/10. In terms of biological role, catalyzes the methylation of C-1 in cobalt-precorrin-5B to form cobalt-precorrin-6A. This chain is Cobalt-precorrin-5B C(1)-methyltransferase, found in Citrobacter koseri (strain ATCC BAA-895 / CDC 4225-83 / SGSC4696).